We begin with the raw amino-acid sequence, 196 residues long: MVKIGVLGLQGAVREHVKSVEASGAEAVVVKRIEQLEEIDGLILPGGESTTMRRLIDKYAFMEPLRTFAKSGKPMFGTCAGMILLAKTLIGYEEAHIGAMDITVERNAFGRQKDSFEAALSIEGVGEDFVGVFIRAPYVVEVADNVEVLSKHGDRMVAVRQDQFLAASFHPELTDDHRVTAYFVEMVKEAKMKKVV.

47–49 (GES) provides a ligand contact to L-glutamine. The active-site Nucleophile is cysteine 79. L-glutamine-binding positions include arginine 106 and 134 to 135 (IR). Residues histidine 170 and glutamate 172 each act as charge relay system in the active site.

It belongs to the glutaminase PdxT/SNO family. In terms of assembly, in the presence of PdxS, forms a dodecamer of heterodimers. Only shows activity in the heterodimer.

The catalysed reaction is aldehydo-D-ribose 5-phosphate + D-glyceraldehyde 3-phosphate + L-glutamine = pyridoxal 5'-phosphate + L-glutamate + phosphate + 3 H2O + H(+). It carries out the reaction L-glutamine + H2O = L-glutamate + NH4(+). Its pathway is cofactor biosynthesis; pyridoxal 5'-phosphate biosynthesis. In terms of biological role, catalyzes the hydrolysis of glutamine to glutamate and ammonia as part of the biosynthesis of pyridoxal 5'-phosphate. The resulting ammonia molecule is channeled to the active site of PdxS. This is Pyridoxal 5'-phosphate synthase subunit PdxT from Bacillus cereus (strain G9842).